A 456-amino-acid polypeptide reads, in one-letter code: Phosphomethylpyrimidine synthase (456 aa).

Substrate is bound by residues asparagine 80, methionine 109, tyrosine 139, histidine 175, 195–197, 236–239, and glutamate 275; these read SRG and DSLR. Histidine 279 lines the Zn(2+) pocket. Tyrosine 302 serves as a coordination point for substrate. Residue histidine 343 participates in Zn(2+) binding. [4Fe-4S] cluster is bound by residues cysteine 423, cysteine 426, and cysteine 431.

This sequence belongs to the ThiC family. Requires [4Fe-4S] cluster as cofactor.

It carries out the reaction 5-amino-1-(5-phospho-beta-D-ribosyl)imidazole + S-adenosyl-L-methionine = 4-amino-2-methyl-5-(phosphooxymethyl)pyrimidine + CO + 5'-deoxyadenosine + formate + L-methionine + 3 H(+). Its pathway is cofactor biosynthesis; thiamine diphosphate biosynthesis. Catalyzes the synthesis of the hydroxymethylpyrimidine phosphate (HMP-P) moiety of thiamine from aminoimidazole ribotide (AIR) in a radical S-adenosyl-L-methionine (SAM)-dependent reaction. The sequence is that of Phosphomethylpyrimidine synthase from Prochlorococcus marinus subsp. pastoris (strain CCMP1986 / NIES-2087 / MED4).